A 307-amino-acid chain; its full sequence is Undecaprenyl-diphosphatase 2 (307 aa).

8 consecutive transmembrane segments (helical) span residues 19 to 41 (GVTE…IIGF), 56 to 76 (IHMF…VLYW), 117 to 137 (FKFW…GLPF), 144 to 164 (LLFF…WMIF), 208 to 228 (IIGA…SFFL), 229 to 249 (AIPM…VVLS), 251 to 271 (VQIL…LVVV), and 285 to 305 (IFAV…FTKV).

Belongs to the UppP family.

It is found in the cell membrane. The catalysed reaction is di-trans,octa-cis-undecaprenyl diphosphate + H2O = di-trans,octa-cis-undecaprenyl phosphate + phosphate + H(+). Catalyzes the dephosphorylation of undecaprenyl diphosphate (UPP). Confers resistance to bacitracin. This is Undecaprenyl-diphosphatase 2 from Clostridium acetobutylicum (strain ATCC 824 / DSM 792 / JCM 1419 / IAM 19013 / LMG 5710 / NBRC 13948 / NRRL B-527 / VKM B-1787 / 2291 / W).